The sequence spans 151 residues: Aspartate carbamoyltransferase regulatory chain (151 aa).

Zn(2+) is bound by residues Cys-108, Cys-113, Cys-138, and Cys-141.

The protein belongs to the PyrI family. As to quaternary structure, contains catalytic and regulatory chains. The cofactor is Zn(2+).

In terms of biological role, involved in allosteric regulation of aspartate carbamoyltransferase. This Pyrobaculum neutrophilum (strain DSM 2338 / JCM 9278 / NBRC 100436 / V24Sta) (Thermoproteus neutrophilus) protein is Aspartate carbamoyltransferase regulatory chain.